Here is a 211-residue protein sequence, read N- to C-terminus: Pyridoxine/pyridoxamine 5'-phosphate oxidase (211 aa).

Substrate contacts are provided by residues R7 to Y10 and K65. Residues R60 to K65, Y75 to T76, R81, K82, and Q104 each bind FMN. Residues Y122, R126, and S130 each coordinate substrate. Residues Q139 to S140 and W184 each bind FMN. Residue R190–H192 coordinates substrate. Residue R194 coordinates FMN.

This sequence belongs to the pyridoxamine 5'-phosphate oxidase family. Homodimer. FMN serves as cofactor.

The catalysed reaction is pyridoxamine 5'-phosphate + O2 + H2O = pyridoxal 5'-phosphate + H2O2 + NH4(+). It carries out the reaction pyridoxine 5'-phosphate + O2 = pyridoxal 5'-phosphate + H2O2. It participates in cofactor metabolism; pyridoxal 5'-phosphate salvage; pyridoxal 5'-phosphate from pyridoxamine 5'-phosphate: step 1/1. It functions in the pathway cofactor metabolism; pyridoxal 5'-phosphate salvage; pyridoxal 5'-phosphate from pyridoxine 5'-phosphate: step 1/1. Functionally, catalyzes the oxidation of either pyridoxine 5'-phosphate (PNP) or pyridoxamine 5'-phosphate (PMP) into pyridoxal 5'-phosphate (PLP). This chain is Pyridoxine/pyridoxamine 5'-phosphate oxidase, found in Photobacterium profundum (strain SS9).